The following is a 1221-amino-acid chain: Phosphoenolpyruvate carboxylase 2 (1221 aa).

H156 is an active-site residue. Disordered stretches follow at residues 443–588 (TAAE…DPTF) and 642–661 (REPAGEAHGGVGAGGGGGGG). Composition is skewed to low complexity over residues 503–513 (TTTATAAAAAA) and 550–564 (PFREAANAAMSTAAS). 2 stretches are compositionally biased toward gly residues: residues 565–575 (GGAGGGGGGGA) and 648–661 (AHGGVGAGGGGGGG). Residue K886 is part of the active site.

It belongs to the PEPCase type 1 family. Mg(2+) is required as a cofactor.

Its subcellular location is the cytoplasm. The catalysed reaction is oxaloacetate + phosphate = phosphoenolpyruvate + hydrogencarbonate. Through the carboxylation of phosphoenolpyruvate (PEP) it forms oxaloacetate, a four-carbon dicarboxylic acid source for the tricarboxylic acid cycle. This is Phosphoenolpyruvate carboxylase 2 from Chlamydomonas reinhardtii (Chlamydomonas smithii).